The sequence spans 207 residues: Urease accessory protein UreG (207 aa).

12–19 (GPVGAGKT) lines the GTP pocket.

Belongs to the SIMIBI class G3E GTPase family. UreG subfamily. Homodimer. UreD, UreF and UreG form a complex that acts as a GTP-hydrolysis-dependent molecular chaperone, activating the urease apoprotein by helping to assemble the nickel containing metallocenter of UreC. The UreE protein probably delivers the nickel.

The protein localises to the cytoplasm. Functionally, facilitates the functional incorporation of the urease nickel metallocenter. This process requires GTP hydrolysis, probably effectuated by UreG. The sequence is that of Urease accessory protein UreG from Cereibacter sphaeroides (strain ATCC 17025 / ATH 2.4.3) (Rhodobacter sphaeroides).